Consider the following 196-residue polypeptide: ATP-dependent Clp protease proteolytic subunit 1 (196 aa).

Catalysis depends on S96, which acts as the Nucleophile. Residue H121 is part of the active site.

The protein belongs to the peptidase S14 family. As to quaternary structure, fourteen ClpP subunits assemble into 2 heptameric rings which stack back to back to give a disk-like structure with a central cavity, resembling the structure of eukaryotic proteasomes.

It localises to the cytoplasm. It catalyses the reaction Hydrolysis of proteins to small peptides in the presence of ATP and magnesium. alpha-casein is the usual test substrate. In the absence of ATP, only oligopeptides shorter than five residues are hydrolyzed (such as succinyl-Leu-Tyr-|-NHMec, and Leu-Tyr-Leu-|-Tyr-Trp, in which cleavage of the -Tyr-|-Leu- and -Tyr-|-Trp bonds also occurs).. Cleaves peptides in various proteins in a process that requires ATP hydrolysis. Has a chymotrypsin-like activity. Plays a major role in the degradation of misfolded proteins. The polypeptide is ATP-dependent Clp protease proteolytic subunit 1 (Prochlorococcus marinus (strain NATL2A)).